Here is a 238-residue protein sequence, read N- to C-terminus: Ribonuclease PH (238 aa).

Residues Arg-86 and Gly-124–Arg-126 each bind phosphate.

Belongs to the RNase PH family. Homohexameric ring arranged as a trimer of dimers.

It catalyses the reaction tRNA(n+1) + phosphate = tRNA(n) + a ribonucleoside 5'-diphosphate. Its function is as follows. Phosphorolytic 3'-5' exoribonuclease that plays an important role in tRNA 3'-end maturation. Removes nucleotide residues following the 3'-CCA terminus of tRNAs; can also add nucleotides to the ends of RNA molecules by using nucleoside diphosphates as substrates, but this may not be physiologically important. Probably plays a role in initiation of 16S rRNA degradation (leading to ribosome degradation) during starvation. This Parvibaculum lavamentivorans (strain DS-1 / DSM 13023 / NCIMB 13966) protein is Ribonuclease PH.